Reading from the N-terminus, the 386-residue chain is DNA dC-&gt;dU-editing enzyme APOBEC-3D (386 aa).

CMP/dCMP-type deaminase domains are found at residues 29–145 (GRSY…DWRW) and 187–334 (DDNY…LCSL). Zn(2+) contacts are provided by H78, C109, C112, and H262. E264 functions as the Proton donor in the catalytic mechanism. Zn(2+)-binding residues include C293 and C296.

The protein belongs to the cytidine and deoxycytidylate deaminase family. As to quaternary structure, can form homo- and heterodimers with APOBEC3F and APOBEC3G. Interacts with L1RE1; this interaction inhibits LINE-1 retrotransposition. (Microbial infection) Interacts with HIV-1 Vif. This interaction triggers APOBEC3D polyubiquitylation and degradation by the 26S proteasome. Zn(2+) is required as a cofactor. As to expression, expressed in lymphoid organs. Also detected in non-lymphoid tissues including lung.

It localises to the cytoplasm. It is found in the P-body. The enzyme catalyses a 2'-deoxycytidine in single-stranded DNA + H2O + H(+) = a 2'-deoxyuridine in single-stranded DNA + NH4(+). (Microbial infection) Antiviral activity is neutralized by the HIV-1 virion infectivity factor (Vif), that prevents its incorporation into progeny virions by both inhibiting its translation and/or by inducing its ubiquitination and subsequent degradation by the 26S proteasome. DNA deaminase (cytidine deaminase) which acts as an inhibitor of retrovirus replication and retrotransposon mobility via deaminase-dependent and -independent mechanisms. Exhibits antiviral activity against HIV-1. After the penetration of retroviral nucleocapsids into target cells of infection and the initiation of reverse transcription, it can induce the conversion of cytosine to uracil in the minus-sense single-strand viral DNA, leading to G-to-A hypermutations in the subsequent plus-strand viral DNA. The resultant detrimental levels of mutations in the proviral genome, along with a deamination-independent mechanism that works prior to the proviral integration, together exert efficient antiretroviral effects in infected target cells. Selectively targets single-stranded DNA and does not deaminate double-stranded DNA or single- or double-stranded RNA. Also inhibits the mobility of LTR and non-LTR retrotransposons. Functionally, (Microbial infection) Enhances hepatitis B virus/HBV replication by excluding restriction factors APOBEC3F and APOBEC3G from HBV capsids. This is DNA dC-&gt;dU-editing enzyme APOBEC-3D from Homo sapiens (Human).